Here is a 120-residue protein sequence, read N- to C-terminus: UPF0231 protein Spro_4007 (120 aa).

It belongs to the UPF0231 family.

This Serratia proteamaculans (strain 568) protein is UPF0231 protein Spro_4007.